The chain runs to 311 residues: MSTFSLKIIRVGITVLVVVLAVIAIFNVWAFYTESPWTRDAKFTADVVAIAPDVSGLLTEVPVKDNQLVQKGQILFVIDQPRYQQALAEAEADVAYYQTLAAEKQRESSRRHRLGIQALSQEEIDQASNVLQTVQHQLAKAIAVRDLARLDLERTTVRAPAEGWVTNLNVHAGEFINRGATAVALVKKDTFYILAYLEETKLEGVKPGYRAEITPLGSNRILHGTVDSISAGVTNSSSSADSKGLATIDNNLEWVRLAQRVPVKIHLDSEDQQYLYPAGTTATVVITGPNDRDPHQASPMTKLMHRLREFG.

Residues 11–31 traverse the membrane as a helical segment; that stretch reads VGITVLVVVLAVIAIFNVWAF.

The protein belongs to the membrane fusion protein (MFP) (TC 8.A.1) family.

It localises to the cell inner membrane. Its function is as follows. Forms an efflux pump with AaeB. The sequence is that of p-hydroxybenzoic acid efflux pump subunit AaeA from Yersinia pestis bv. Antiqua (strain Antiqua).